The following is a 465-amino-acid chain: WAS protein family homolog 2 (465 aa).

The tract at residues 1-54 is required for WASH complex assembly; sequence MTPVRMQHSLAGQTYAVPLIQPDLRREEAVQQMADALQYLQKVSGDIFSRISQQ. Residues 1 to 167 form a WHD1 region; that stretch reads MTPVRMQHSL…EGLGGLPSNI (167 aa). Lys220 is covalently cross-linked (Glycyl lysine isopeptide (Lys-Gly) (interchain with G-Cter in ubiquitin)). Disordered regions lie at residues 297 to 407 and 422 to 465; these read QDGV…QGGH and GISG…DWES. Over residues 302–314 the composition is skewed to pro residues; that stretch reads TPPPPPPPPPPAP. The VCA stretch occupies residues 349–465; the sequence is QGAPREVVDP…AEEDEDDWES (117 aa). The WH2 domain occupies 361–383; that stretch reads GRATLLESIRQAGGIGKAKLRSM. Residues 382-398 are compositionally biased toward basic and acidic residues; it reads SMKERKLEKKKQKEQEQ. Residues 424–436 show a composition bias toward gly residues; that stretch reads SGKGPGAGEGPGG. Over residues 456–465 the composition is skewed to acidic residues; it reads AEEDEDDWES.

Belongs to the WASH1 family. In terms of assembly, component of the WASH core complex also described as WASH regulatory complex (SHRC) composed of WASH (WASHC1, WASH2P or WASH3P), WASHC2 (WASHC2A or WASHC2C), WASHC3, WASHC4 and WASHC5. The WASH core complex associates with the F-actin-capping protein dimer (formed by CAPZA1, CAPZA2 or CAPZA3 and CAPZB) in a transient or substoichiometric manner which was initially described as WASH complex. Interacts (via WHD1 region) with WASHC2C; the interaction is direct. Interacts with alpha-tubulin. Interacts with BECN1; WASHC1 and AMBRA1 can competitively interact with BECN1. Interacts with BLOC1S2; may associate with the BLOC-1 complex. Interacts with tubulin gamma chain (TUBG1 or TUBG2). Interacts with EXOC1, EXOC4, EXOC8; in MMP14-positive endosomes in breast tumor cells; indicative for an association with the exocyst complex.

The protein resides in the early endosome membrane. The protein localises to the recycling endosome membrane. It localises to the late endosome. Its subcellular location is the cytoplasmic vesicle. It is found in the autophagosome. The protein resides in the cytoplasm. The protein localises to the cytoskeleton. It localises to the microtubule organizing center. Its subcellular location is the centrosome. It is found in the centriole. Acts as a nucleation-promoting factor at the surface of endosomes, where it recruits and activates the Arp2/3 complex to induce actin polymerization, playing a key role in the fission of tubules that serve as transport intermediates during endosome sorting. Involved in endocytic trafficking of EGF. Involved in transferrin receptor recycling. Regulates the trafficking of endosomal alpha5beta1 integrin to the plasma membrane and involved in invasive cell migration. In T-cells involved in endosome-to-membrane recycling of receptors including T-cell receptor (TCR), CD28 and ITGAL; proposed to be implicated in T-cell proliferation and effector function. In dendritic cells involved in endosome-to-membrane recycling of major histocompatibility complex (MHC) class II probably involving retromer and subsequently allowing antigen sampling, loading and presentation during T-cell activation. Involved in Arp2/3 complex-dependent actin assembly driving Salmonella typhimurium invasion independent of ruffling. Involved in the exocytosis of MMP14 leading to matrix remodeling during invasive migration and implicating late endosome-to-plasma membrane tubular connections and cooperation with the exocyst complex. Involved in negative regulation of autophagy independently from its role in endosomal sorting by inhibiting BECN1 ubiquitination to inactivate PIK3C3/Vps34 activity. The protein is WAS protein family homolog 2 (WASH2P) of Homo sapiens (Human).